The sequence spans 114 residues: Large ribosomal subunit protein uL22 (114 aa).

This sequence belongs to the universal ribosomal protein uL22 family. In terms of assembly, part of the 50S ribosomal subunit.

Its function is as follows. This protein binds specifically to 23S rRNA; its binding is stimulated by other ribosomal proteins, e.g. L4, L17, and L20. It is important during the early stages of 50S assembly. It makes multiple contacts with different domains of the 23S rRNA in the assembled 50S subunit and ribosome. The globular domain of the protein is located near the polypeptide exit tunnel on the outside of the subunit, while an extended beta-hairpin is found that lines the wall of the exit tunnel in the center of the 70S ribosome. The polypeptide is Large ribosomal subunit protein uL22 (Streptococcus mutans serotype c (strain ATCC 700610 / UA159)).